A 743-amino-acid polypeptide reads, in one-letter code: Polyribonucleotide nucleotidyltransferase (743 aa).

Mg(2+)-binding residues include aspartate 489 and aspartate 495. Positions 556–618 (PRIEKMHIGK…PCIDAAIGMI (63 aa)) constitute a KH domain. The S1 motif domain maps to 628–698 (GETYPGKITS…KTGKFKLSRK (71 aa)). A disordered region spans residues 704 to 743 (PEGYVEPQPRERRERREGGREGGRNFERRGGDRDHREPRG).

It belongs to the polyribonucleotide nucleotidyltransferase family. It depends on Mg(2+) as a cofactor.

Its subcellular location is the cytoplasm. The enzyme catalyses RNA(n+1) + phosphate = RNA(n) + a ribonucleoside 5'-diphosphate. In terms of biological role, involved in mRNA degradation. Catalyzes the phosphorolysis of single-stranded polyribonucleotides processively in the 3'- to 5'-direction. The protein is Polyribonucleotide nucleotidyltransferase of Porphyromonas gingivalis (strain ATCC 33277 / DSM 20709 / CIP 103683 / JCM 12257 / NCTC 11834 / 2561).